Reading from the N-terminus, the 3462-residue chain is Extracellular matrix-binding protein EbhA (3462 aa).

The span at 1–19 (MVQQSTTVAEAQGNEQKAN) shows a compositional bias: polar residues. The disordered stretch occupies residues 1-21 (MVQQSTTVAEAQGNEQKANNV). FIVAR domains follow at residues 24–82 (AMDK…INQA), 150–208 (AMGN…VEQA), 276–334 (AMTQ…ITAA), 402–460 (AMTQ…IQQA), 528–586 (AMTN…VEQA), 654–712 (AMTQ…VAQA), 780–838 (AMGT…VTQA), 906–964 (AMSN…ITRA), 1032–1093 (AMDQ…ITNE), 1158–1216 (AMEL…VNGA), 1284–1342 (AMGN…VEQA), 1410–1467 (AMHG…INQA), 1535–1593 (LMDA…VSSA), 1661–1719 (AMEA…VEQL), 1787–1845 (AMQA…VEQL), 1913–1971 (AMET…VDQV), 2039–2093 (SMDQ…VDQA), 2161–2220 (AMDQ…VIKL), and 2415–2471 (AMET…INGA). The helical transmembrane segment at 3267-3289 (VIKNAIGVVGISGLLASFWFFIA) threads the bilayer. The disordered stretch occupies residues 3365-3462 (RRKEDEEDVE…KKKKAKKNKK (98 aa)). 2 stretches are compositionally biased toward basic and acidic residues: residues 3380-3390 (TDEKVLKDNEH) and 3429-3439 (QKDNQSKDKKS). Basic residues predominate over residues 3444–3462 (TSKKVAAKKKKKKAKKNKK).

It localises to the cell membrane. The protein is Extracellular matrix-binding protein EbhA (ebhA) of Staphylococcus aureus (strain Newman).